A 468-amino-acid polypeptide reads, in one-letter code: Pancreatic lipase-related protein 2 (468 aa).

An N-terminal signal peptide occupies residues 1–16; sequence MLLCWIVSLLLATVGG. The cysteines at positions 20 and 26 are disulfide-linked. Residues 92–104 form a required for galactolipase activity region; the sequence is VHGFIDKGEDGWL. Residues Cys108 and Cys119 are joined by a disulfide bond. Residue Ser170 is the Nucleophile of the active site. The Charge relay system role is filled by Asp194. Residues Glu205, Arg208, Asp210, and Asp213 each coordinate Ca(2+). Cysteines 255 and 279 form a disulfide. The interval 256–278 is required for galactolipase activity; sequence QKNILSTIVDINGIWEGTQNFVA. The Charge relay system role is filled by His281. Intrachain disulfides connect Cys303/Cys314 and Cys317/Cys322. N-linked (GlcNAc...) asparagine glycosylation is found at Asn352 and Asn427. The 113-residue stretch at 356-468 folds into the PLAT domain; the sequence is WRYKVSVTLS…EDVLQSLYPC (113 aa). Cys452 and Cys468 are disulfide-bonded.

This sequence belongs to the AB hydrolase superfamily. Lipase family. Expressed in pancreatic acinar cells (at protein level).

It localises to the secreted. Its subcellular location is the zymogen granule membrane. The protein resides in the cell projection. It is found in the neuron projection. It carries out the reaction a triacylglycerol + H2O = a diacylglycerol + a fatty acid + H(+). The catalysed reaction is a 1,2-diacyl-3-O-(beta-D-galactosyl)-sn-glycerol + 2 H2O = 3-beta-D-galactosyl-sn-glycerol + 2 a fatty acid + 2 H(+). The enzyme catalyses 1,2,3-tri-(9Z-octadecenoyl)-glycerol + H2O = di-(9Z)-octadecenoylglycerol + (9Z)-octadecenoate + H(+). It catalyses the reaction di-(9Z)-octadecenoylglycerol + H2O = (9Z-octadecenoyl)-glycerol + (9Z)-octadecenoate + H(+). It carries out the reaction (9Z-octadecenoyl)-glycerol + H2O = glycerol + (9Z)-octadecenoate + H(+). The catalysed reaction is 1-(9Z-octadecenoyl)-glycerol + H2O = glycerol + (9Z)-octadecenoate + H(+). The enzyme catalyses 1,2,3-tripropanoylglycerol + H2O = dipropanoylglycerol + propanoate + H(+). It catalyses the reaction 1,2,3-tributanoylglycerol + H2O = dibutanoylglycerol + butanoate + H(+). It carries out the reaction 1,2,3-trioctanoylglycerol + H2O = dioctanoylglycerol + octanoate + H(+). The catalysed reaction is 1,2-didecanoylglycerol + H2O = decanoylglycerol + decanoate + H(+). The enzyme catalyses long chain 1,2-diacyl-3-O-beta-D-galactosyl-sn-glycerol + H2O = long chain acyl-3-O-beta-D-galactosyl-sn-glycerol + a fatty acid + H(+). It catalyses the reaction 1,2-dioctanoyl-3-O-beta-D-galactosyl-sn-glycerol + H2O = octanoyl-3-(beta-D-galactosyl)-sn-glycerol + octanoate + H(+). It carries out the reaction 1,2-didodecanoyl-3-beta-D-galactosyl-sn-glycerol + H2O = dodecanoyl-3-beta-D-galactosyl-sn-glycerol + dodecanoate + H(+). The catalysed reaction is 1-beta-D-galactosyl-2,3-didodecanoyl-sn-glycerol + H2O = 1-beta-D-galactosyl-dodecanoyl-sn-glycerol + dodecanoate + H(+). The enzyme catalyses a 1,2-diacyl-3-O-[alpha-D-galactosyl-(1-&gt;6)-beta-D-galactosyl]-sn-glycerol + H2O = acyl-3-O-[alpha-D-galactosyl-(1-&gt;6)-beta-D-galactosyl]-sn-glycerol + a fatty acid + H(+). It catalyses the reaction long chain 1,2-diacyl-3-O-[alpha-D-galactosyl-(1-&gt;6)-beta-D-galactosyl]-sn-glycerol + H2O = long chain acyl-3-O-[alpha-D-galactosyl-(1-&gt;6)-beta-D-galactosyl]-sn-glycerol + a fatty acid + H(+). It carries out the reaction 1,2-dioctanoyl-3-O-[alpha-D-galactosyl-(1-&gt;6)-beta-D-galactosyl]-sn-glycerol + H2O = octanoyl-3-O-[alpha-D-galactosyl-(1-&gt;6)-beta-D-galactosyl]-sn-glycerol + octanoate + H(+). The catalysed reaction is 1,2-didodecanoyl-3-O-[alpha-D-galactosyl-(1-&gt;6)-beta-D-galactosyl]-sn-glycerol + H2O = dodecanoyl-3-O-[alpha-D-galactosyl-(1-&gt;6)-beta-D-galactosyl]-sn-glycerol + dodecanoate + H(+). The enzyme catalyses a 1,2-diacyl-sn-glycero-3-phosphocholine + H2O = a monoacyl-sn-glycero-3-phosphocholine + a fatty acid + H(+). The protein operates within glycerolipid metabolism; triacylglycerol degradation. Its pathway is glycolipid metabolism. Its activity is regulated as follows. CLPS stimulates triacylglycerol lipase activity. Triacylglycerol lipase activity is not inhibited by increasing bile salt concentration. Lipase that primarily hydrolyzes triglycerides and galactosylglycerides. In neonates, may play a major role in pancreatic digestion of dietary fats such as milk fat globules enriched in long-chain triglycerides. Hydrolyzes short-, medium- and long-chain fatty acyls in triglycerides without apparent positional specificity. Can completely deacylate triacylglycerols. When the liver matures and bile salt synthesis increases, likely functions mainly as a galactolipase and monoacylglycerol lipase. Hydrolyzes monogalactosyldiglycerols (MGDG) and digalactosyldiacylglycerols (DGDG) present in a plant-based diet, releasing long-chain polyunsaturated fatty acids. Hydrolyzes medium- and long-chain fatty acyls in galactolipids. May act together with LIPF to hydrolyze partially digested triglycerides. Hydrolyzes long-chain monoglycerides with high efficiency. In cytotoxic T cells, contributes to perforin-dependent cell lysis, but is unlikely to mediate direct cytotoxicity. Also has low phospholipase activity. In neurons, required for the localization of the phospholipid 1-oleoyl-2-palmitoyl-PC (OPPC) to neurite tips through acyl chain remodeling of membrane phospholipids. The resulting OPPC-rich lipid membrane domain recruits the t-SNARE protein STX4 by selectively interacting with the STX4 transmembrane domain and this promotes surface expression of the dopamine transporter SLC6A3/DAT at neurite tips by facilitating fusion of SLC6A3-containing transport vesicles with the plasma membrane. In Rattus norvegicus (Rat), this protein is Pancreatic lipase-related protein 2.